Consider the following 289-residue polypeptide: MRTSNSKKHLGHTARKRFGQNFLSDMNVIHNIVAAINPRNEDFLLEIGPGLGALTEPVAEQVEKLTVIELDRDLAERLRHHPFLHHKLTVIEQDALRFNFRDYFDSLNLNHHQAIRIFGNLPYNISTPLMFHLFKFHDLIQDMHFMLQKEVVKRLCAAPNSKAYGRLTIMAQYYCQVIPVLEVPPTAFKPAPKVDSAVVRLMPYKTLPYPVKDVYWLNRVTTHAFNQRRKTLRNALSTLFTAQQLEMLGINLTDRAENLTISDYARLANWLCDNPPAIDTNQEILYDEL.

Positions 21, 23, 48, 69, 94, and 120 each coordinate S-adenosyl-L-methionine.

Belongs to the class I-like SAM-binding methyltransferase superfamily. rRNA adenine N(6)-methyltransferase family. RsmA subfamily.

The protein localises to the cytoplasm. The enzyme catalyses adenosine(1518)/adenosine(1519) in 16S rRNA + 4 S-adenosyl-L-methionine = N(6)-dimethyladenosine(1518)/N(6)-dimethyladenosine(1519) in 16S rRNA + 4 S-adenosyl-L-homocysteine + 4 H(+). Specifically dimethylates two adjacent adenosines (A1518 and A1519) in the loop of a conserved hairpin near the 3'-end of 16S rRNA in the 30S particle. May play a critical role in biogenesis of 30S subunits. The protein is Ribosomal RNA small subunit methyltransferase A of Haemophilus ducreyi (strain 35000HP / ATCC 700724).